A 129-amino-acid polypeptide reads, in one-letter code: MAPRSLYLLAVLLFSANLFAGVGFAAAAEGPEDKGLTKGGKGKGGKGTKVSDDDTNGTDPDPEPEPEPEPEPEPEPEPEPEPEPEPEPEPEPEPEPEPEPEPEPEPGAATLKSVALPFAIAAVGLVAAF.

The first 27 residues, 1–27 (MAPRSLYLLAVLLFSANLFAGVGFAAA), serve as a signal peptide directing secretion. The segment at 27-111 (AAEGPEDKGL…PEPEPGAATL (85 aa)) is disordered. The span at 53 to 104 (DDTNGTDPDPEPEPEPEPEPEPEPEPEPEPEPEPEPEPEPEPEPEPEPEPEP) shows a compositional bias: acidic residues. N-linked (GlcNAc...) asparagine glycosylation occurs at Asn-56. Repeat copies occupy residues 59–60 (DP), 61–62 (DP), 63–64 (EP), 65–66 (EP), 67–68 (EP), 69–70 (EP), 71–72 (EP), 73–74 (EP), 75–76 (EP), 77–78 (EP), 79–80 (EP), 81–82 (EP), 83–84 (EP), 85–86 (EP), 87–88 (EP), 89–90 (EP), 91–92 (EP), 93–94 (EP), 95–96 (EP), 97–98 (EP), 99–100 (EP), 101–102 (EP), 103–104 (EP), and 105–106 (EP). The tract at residues 59-106 (DPDPEPEPEPEPEPEPEPEPEPEPEPEPEPEPEPEPEPEPEPEPEPEP) is 24 X 2 AA tandem repeats of [DE]-P. A lipid anchor (GPI-anchor amidated glycine) is attached at Gly-107. A propeptide spanning residues 108–129 (AATLKSVALPFAIAAVGLVAAF) is cleaved from the precursor.

It is found in the cell membrane. In terms of biological role, major surface antigen of procyclic forms. This chain is Procyclic form-specific polypeptide A-beta (PARPA-BETA), found in Trypanosoma brucei brucei.